The sequence spans 492 residues: E3 ubiquitin-protein ligase TRIM35 (492 aa).

At Met-1 the chain carries N-acetylmethionine. Ser-4 and Ser-8 each carry phosphoserine. An RING-type zinc finger spans residues 21-61; the sequence is CAVCYDPFRDAVTLRCGHNFCRGCVSRCWEVQVSPTCPVCK. The B box-type zinc-finger motif lies at 96–137; that stretch reads RFSRVCRLHRGQLSLFCLEDKELLCCSCQADPRHQGHRVQPV. Cys-101, His-104, Cys-123, and His-129 together coordinate Zn(2+). Positions 210–249 form a coiled coil; the sequence is AEETRQKQLLADEKMKQLTEETEVLAHEIERLQMEMKEDD. The B30.2/SPRY domain occupies 283 to 486; sequence YLGSLQYRVW…LRICPLHISV (204 aa).

Interacts with PKM isoform M2, but not isoform M1; this interaction may compete with that between PKM and FGFR1, and hence reduces FGFR1-dependent tyrosine phosphorylation of PKM. Interacts with IRF7; this interaction promotes IRF7 proteasomal degradation. Interacts with TRAF3; this interaction promotes TRAF3 activation.

It localises to the cytoplasm. It is found in the nucleus. The catalysed reaction is S-ubiquitinyl-[E2 ubiquitin-conjugating enzyme]-L-cysteine + [acceptor protein]-L-lysine = [E2 ubiquitin-conjugating enzyme]-L-cysteine + N(6)-ubiquitinyl-[acceptor protein]-L-lysine.. It functions in the pathway protein modification; protein ubiquitination. In terms of biological role, E3 ubiquitin-protein ligase that participates in multiple biological processes including cell death, glucose metabolism, and in particular, the innate immune response. Mediates 'Lys-63'-linked polyubiquitination of TRAF3 thereby promoting type I interferon production via RIG-I signaling pathway. Can also catalyze 'Lys-48'-linked polyubiquitination and proteasomal degradation of viral proteins such as influenza virus PB2. Acts as a negative feedback regulator of TLR7- and TLR9-triggered signaling. Mechanistically, promotes the 'Lys-48'-linked ubiquitination of IRF7 and induces its degradation via a proteasome-dependent pathway. Reduces FGFR1-dependent tyrosine phosphorylation of PKM, inhibiting PKM-dependent lactate production, glucose metabolism, and cell growth. This is E3 ubiquitin-protein ligase TRIM35 (TRIM35) from Pongo abelii (Sumatran orangutan).